Reading from the N-terminus, the 471-residue chain is MPN domain-containing protein (471 aa).

The span at 1–10 shows a compositional bias: low complexity; sequence MAAPEPLSPA. Residues 1-63 are disordered; sequence MAAPEPLSPA…GGGGAGAGGC (63 aa). Ala-2 carries the N-acetylalanine modification. Ser-8 carries the post-translational modification Phosphoserine. The span at 16-29 shows a compositional bias: acidic residues; it reads EAPEEDEDEAEAED. Over residues 36 to 63 the composition is skewed to gly residues; the sequence is GAGGGRSGGGGSSVSGGGGGGGAGAGGC. The RAMA domain occupies 71 to 166; that stretch reads TRRAVTLRVL…KYKATWLRLH (96 aa). DNA-binding residues include Ser-123, Ser-125, and Trp-145. Residues 170–229 are disordered; sequence TPATAADESPASEGEEEELLMEEEEEDVLAGVSAEDKSRRPLGKSPSEPAHPEATTPGKR. Phosphoserine occurs at positions 178 and 181. Positions 182–197 are enriched in acidic residues; it reads EGEEEELLMEEEEEDV. The MPN domain occupies 272-407; that stretch reads VAVSSNVLFL…PESKISPFWV (136 aa). 3 residues coordinate Zn(2+): His-349, His-351, and Asp-362. Positions 349 to 362 match the JAMM motif motif; the sequence is HSHPHSPALPSLQD.

The protein belongs to the peptidase M67 family. Monomer. Mainly monomoric, but when binds to dsDNA, forms homotetramer assembled into two homodimers. May interact with histones; this interaction is facilitated by dsDNA binding. Degraded following binding to N(6)-methyladenosine methylated DNA (m6A).

Functionally, probable protease. Acts as a sensor of N(6)-methyladenosine methylation on DNA (m6A): recognizes and binds m6A DNA, leading to its degradation. Binds only double strand DNA (dsDNA) in a sequence-independent manner. The sequence is that of MPN domain-containing protein from Homo sapiens (Human).